The chain runs to 275 residues: tRNA uridine(34) hydroxylase (275 aa).

The 97-residue stretch at 122-218 (SRSDVYTIDT…YFKSTQNKNS (97 aa)) folds into the Rhodanese domain. Cysteine 178 (cysteine persulfide intermediate) is an active-site residue.

This sequence belongs to the TrhO family.

The catalysed reaction is uridine(34) in tRNA + AH2 + O2 = 5-hydroxyuridine(34) in tRNA + A + H2O. Its function is as follows. Catalyzes oxygen-dependent 5-hydroxyuridine (ho5U) modification at position 34 in tRNAs. This Ehrlichia chaffeensis (strain ATCC CRL-10679 / Arkansas) protein is tRNA uridine(34) hydroxylase.